The chain runs to 199 residues: Probable nicotinate-nucleotide adenylyltransferase (199 aa).

Belongs to the NadD family.

It catalyses the reaction nicotinate beta-D-ribonucleotide + ATP + H(+) = deamido-NAD(+) + diphosphate. It participates in cofactor biosynthesis; NAD(+) biosynthesis; deamido-NAD(+) from nicotinate D-ribonucleotide: step 1/1. Functionally, catalyzes the reversible adenylation of nicotinate mononucleotide (NaMN) to nicotinic acid adenine dinucleotide (NaAD). This chain is Probable nicotinate-nucleotide adenylyltransferase, found in Roseiflexus castenholzii (strain DSM 13941 / HLO8).